The following is a 501-amino-acid chain: Geissoschizine oxidase (501 aa).

A helical membrane pass occupies residues 1–21; the sequence is MEFSFSSPALYIVYFLLFFVV. Residue Asn60 is glycosylated (N-linked (GlcNAc...) asparagine). Heme is bound at residue Cys442.

This sequence belongs to the cytochrome P450 family. The cofactor is heme. Expressed in leaf epidermis. Also present in the leaf internal phloem-associated parenchyma (IPAP) inside the mesophyll.

The protein resides in the membrane. It carries out the reaction (19E)-geissoschizine + reduced [NADPH--hemoprotein reductase] + O2 = akuammicine + formate + oxidized [NADPH--hemoprotein reductase] + H2O + H(+). It catalyses the reaction (19E)-geissoschizine + reduced [NADPH--hemoprotein reductase] + O2 = 3,17-didehydrostemmadenine + oxidized [NADPH--hemoprotein reductase] + 2 H2O. It functions in the pathway alkaloid biosynthesis. Functionally, component of the seco-iridoid and derivatives monoterpenoid indole alkaloids (MIAs, e.g. vincristine, quinine, and strychnine) biosynthesis pathway. Catalyzes the oxidation of 19E-geissoschizine to produce a short-lived MIA unstable intermediate which can be spontaneously converted into akuammicine or oxidized by Redox1 and Redox2 to produce stemmadenine and 16S/R-deshydroxymethylstemmadenine (16S/R-DHS). This is Geissoschizine oxidase from Catharanthus roseus (Madagascar periwinkle).